The primary structure comprises 351 residues: 7,8-didemethyl-8-hydroxy-5-deazariboflavin synthase (351 aa).

The 241-residue stretch at 35 to 275 (ITYSKNAFIP…EDISIQVPPN (241 aa)) folds into the Radical SAM core domain. Residues Cys49, Cys53, and Cys56 each contribute to the [4Fe-4S] cluster site.

It belongs to the radical SAM superfamily. CofG family. As to quaternary structure, consists of two subunits, CofG and CofH. Requires [4Fe-4S] cluster as cofactor.

The enzyme catalyses 5-amino-5-(4-hydroxybenzyl)-6-(D-ribitylimino)-5,6-dihydrouracil + S-adenosyl-L-methionine = 7,8-didemethyl-8-hydroxy-5-deazariboflavin + 5'-deoxyadenosine + L-methionine + NH4(+) + H(+). It functions in the pathway cofactor biosynthesis; coenzyme F0 biosynthesis. Its function is as follows. Catalyzes the radical-mediated synthesis of 7,8-didemethyl-8-hydroxy-5-deazariboflavin from 5-amino-5-(4-hydroxybenzyl)-6-(D-ribitylimino)-5,6-dihydrouracil. This Methanococcus vannielii (strain ATCC 35089 / DSM 1224 / JCM 13029 / OCM 148 / SB) protein is 7,8-didemethyl-8-hydroxy-5-deazariboflavin synthase.